Here is a 134-residue protein sequence, read N- to C-terminus: Methylglyoxal synthase (134 aa).

One can recognise an MGS-like domain in the interval 1 to 134 (MNIALIAHDN…DWRERVKERG (134 aa)). Substrate contacts are provided by residues histidine 8, lysine 12, 34 to 37 (TGTT), and 54 to 55 (SG). Aspartate 60 acts as the Proton donor/acceptor in catalysis. A substrate-binding site is contributed by histidine 87.

Belongs to the methylglyoxal synthase family.

The enzyme catalyses dihydroxyacetone phosphate = methylglyoxal + phosphate. Its function is as follows. Catalyzes the formation of methylglyoxal from dihydroxyacetone phosphate. The polypeptide is Methylglyoxal synthase (Alkaliphilus metalliredigens (strain QYMF)).